The chain runs to 2053 residues: Nonribosomal peptide synthetase pboA (2053 aa).

The tract at residues 16 to 402 (ACRDNADRPA…GRRDRVAKVR (387 aa)) is adenylation 1. The Carrier 1 domain occupies 503 to 579 (RSYASVDEVI…HLITVCRERR (77 aa)). Position 540 is an O-(pantetheine 4'-phosphoryl)serine (Ser-540). The condensation 1 stretch occupies residues 611–896 (NDPSLYCVKH…LLQSVHRTVQ (286 aa)). An adenylation 2 region spans residues 1034 to 1418 (SAAARNPTNI…GRRDRQVKLR (385 aa)). The 79-residue stretch at 1515–1593 (VPDTSVKKII…DIVALVEGKI (79 aa)) folds into the Carrier 2 domain. Position 1553 is an O-(pantetheine 4'-phosphoryl)serine (Ser-1553). The segment at 1630–1981 (NSQCQSGFNV…LQLRLEYDSD (352 aa)) is condensation 2.

This sequence belongs to the NRP synthetase family. It depends on pantetheine 4'-phosphate as a cofactor.

It functions in the pathway secondary metabolite biosynthesis. Nonribosomal peptide synthetase; part of the gene cluster that mediates the biosynthesis of protubonine B, a hydroxylated and diacetylated cyclo-L-Trp-L-Leu derivative. The first step of the protubonine B synthesis is performed by the nonribosomal peptide synthetase pboA that catalyzes the formation of cyclo-L-Trp-L-Leu by condensing L-Leu with L-Trp. The flavin-dependent monooxygenase pboD is responsible for hydroxylation at C-3 of the indole ring and subsequent formation of the pyrrolidine ring, leadind to protubonine D. Protubonine D is further diacetylated by two acetyltransferases, pboB and pboC, to form the final product protubonine B via protubonine C. This chain is Nonribosomal peptide synthetase pboA, found in Aspergillus ustus.